The primary structure comprises 330 residues: Putative [LysW]-L-2-aminoadipate/[LysW]-L-glutamate phosphate reductase (330 aa).

10–13 (SGYI) is a binding site for NADP(+). Cys-142 is an active-site residue. Residue Asn-297 coordinates NADP(+).

This sequence belongs to the NAGSA dehydrogenase family. Type 1 subfamily. LysY sub-subfamily.

It is found in the cytoplasm. It catalyses the reaction [amino-group carrier protein]-C-terminal-N-(1-carboxy-5-oxopentan-1-yl)-L-glutamine + phosphate + NADP(+) = [amino-group carrier protein]-C-terminal-N-(1-carboxy-5-phosphooxy-5-oxopentan-1-yl)-L-glutamine + NADPH + H(+). It carries out the reaction [amino-group carrier protein]-C-terminal-gamma-(L-glutamyl-5-semialdehyde)-L-glutamate + phosphate + NADP(+) = [amino-group carrier protein]-C-terminal-gamma-(5-phospho-L-glutamyl)-L-glutamate + NADPH + H(+). It functions in the pathway amino-acid biosynthesis; L-lysine biosynthesis via AAA pathway; L-lysine from L-alpha-aminoadipate (Thermus route): step 3/5. The protein operates within amino-acid biosynthesis; L-arginine biosynthesis. Its function is as follows. Involved in both the arginine and lysine biosynthetic pathways. The chain is Putative [LysW]-L-2-aminoadipate/[LysW]-L-glutamate phosphate reductase from Pyrococcus horikoshii (strain ATCC 700860 / DSM 12428 / JCM 9974 / NBRC 100139 / OT-3).